The chain runs to 39 residues: Potassium channel toxin alpha-KTx 2.18 (39 aa).

3 cysteine pairs are disulfide-bonded: Cys7–Cys29, Cys13–Cys34, and Cys17–Cys36. Ile39 is modified (isoleucine amide).

This sequence belongs to the short scorpion toxin superfamily. Potassium channel inhibitor family. Alpha-KTx 02 subfamily. As to expression, expressed by the venom gland.

It is found in the secreted. In terms of biological role, weakly blocks Kv1.3/KCNA3 voltage-gated potassium channels. The protein is Potassium channel toxin alpha-KTx 2.18 of Centruroides limpidus (Mexican scorpion).